A 251-amino-acid chain; its full sequence is Putative F-box protein L166 (251 aa).

Positions Met1–Ile46 constitute an F-box domain. The interval Pro188–Arg251 is disordered. Residues Thr202–Ile217 are compositionally biased toward polar residues. The span at Lys241–Arg251 shows a compositional bias: basic residues.

The protein is Putative F-box protein L166 of Acanthamoeba polyphaga (Amoeba).